Consider the following 719-residue polypeptide: Transcription factor E4F1 (719 aa).

Residues 20-63 are required for ubiquitin ligase activity; the sequence is NIITIQTTLGDEDEDIHKCGKCLAEFSALDAFIQHKLSRSCKRT. Residues 59–125 form a disordered region; sequence SCKRTQDPQT…SEDESSSPSK (67 aa). Over residues 98 to 109 the composition is skewed to basic and acidic residues; that stretch reads EKQDAKVASGDK. The tract at residues 128 to 207 is mediates dimerization and DNA-binding; it reads WKLNTEGRYV…GLAFRESGAL (80 aa). 2 C2H2-type zinc fingers span residues 136–158 and 164–186; these read YVCD…MFTH and FVCE…KRRH. The segment at 192-216 adopts a C2H2-type 3; degenerate zinc-finger fold; it reads YRCNQCGLAFRESGALTRHLKSLTP. 5 consecutive C2H2-type zinc fingers follow at residues 365-387, 393-415, 421-443, 449-471, and 477-499; these read YKCP…VKGH, FKCL…METH, YKCG…MRAH, YHCS…HRTH, and YVCQ…IRHH. Residues 505 to 527 form a C2H2-type 9; degenerate zinc finger; the sequence is FKCSKCGRGFAEHGTLNRHLRAK.

It is found in the nucleus. It localises to the nucleoplasm. The protein resides in the cytoplasm. The catalysed reaction is S-ubiquitinyl-[E2 ubiquitin-conjugating enzyme]-L-cysteine + [acceptor protein]-L-lysine = [E2 ubiquitin-conjugating enzyme]-L-cysteine + N(6)-ubiquitinyl-[acceptor protein]-L-lysine.. It participates in protein modification; protein ubiquitination. In terms of biological role, may function as a transcriptional repressor. May also function as a ubiquitin ligase. Functions in cell survival and proliferation through control of the cell cycle. The protein is Transcription factor E4F1 (e4f1) of Danio rerio (Zebrafish).